Consider the following 1172-residue polypeptide: DNA-directed RNA polymerase subunit beta (1172 aa).

This sequence belongs to the RNA polymerase beta chain family. In terms of assembly, the RNAP catalytic core consists of 2 alpha, 1 beta, 1 beta' and 1 omega subunit. When a sigma factor is associated with the core the holoenzyme is formed, which can initiate transcription.

It catalyses the reaction RNA(n) + a ribonucleoside 5'-triphosphate = RNA(n+1) + diphosphate. Functionally, DNA-dependent RNA polymerase catalyzes the transcription of DNA into RNA using the four ribonucleoside triphosphates as substrates. This Thermosipho melanesiensis (strain DSM 12029 / CIP 104789 / BI429) protein is DNA-directed RNA polymerase subunit beta.